Reading from the N-terminus, the 221-residue chain is GTP cyclohydrolase 1 (221 aa).

The Zn(2+) site is built by cysteine 109, histidine 112, and cysteine 180.

Belongs to the GTP cyclohydrolase I family. Toroid-shaped homodecamer, composed of two pentamers of five dimers.

The enzyme catalyses GTP + H2O = 7,8-dihydroneopterin 3'-triphosphate + formate + H(+). It functions in the pathway cofactor biosynthesis; 7,8-dihydroneopterin triphosphate biosynthesis; 7,8-dihydroneopterin triphosphate from GTP: step 1/1. The protein is GTP cyclohydrolase 1 of Sodalis glossinidius (strain morsitans).